A 354-amino-acid chain; its full sequence is Protein RecA (354 aa).

Gly67–Thr74 serves as a coordination point for ATP.

It belongs to the RecA family.

The protein resides in the cytoplasm. Its function is as follows. Can catalyze the hydrolysis of ATP in the presence of single-stranded DNA, the ATP-dependent uptake of single-stranded DNA by duplex DNA, and the ATP-dependent hybridization of homologous single-stranded DNAs. It interacts with LexA causing its activation and leading to its autocatalytic cleavage. This Pasteurella multocida (strain Pm70) protein is Protein RecA.